Consider the following 309-residue polypeptide: Glutaminase (309 aa).

Substrate contacts are provided by S65, N117, E162, N169, Y193, Y245, and V263.

This sequence belongs to the glutaminase family. Homotetramer.

It catalyses the reaction L-glutamine + H2O = L-glutamate + NH4(+). This chain is Glutaminase, found in Geobacillus thermodenitrificans (strain NG80-2).